A 146-amino-acid polypeptide reads, in one-letter code: METELMRIGVSLPDTLLGKFDEIIEKRGYSSRSEAIRDSIRSYISYNEWMGNIKGHHVGTIVIIYDHTQRGLSNVLTDIQHHYSHLIRSSIHIYPDREDCFEIVVLEGEGKEITELAEAIMALKGVKLSKLITTESNETDEPSIVI.

Residues H81, H92, Y94, and C100 each coordinate Ni(2+).

The protein belongs to the transcriptional regulatory CopG/NikR family. The cofactor is Ni(2+).

Transcriptional regulator. The polypeptide is Putative nickel-responsive regulator 1 (Methanosarcina mazei (strain ATCC BAA-159 / DSM 3647 / Goe1 / Go1 / JCM 11833 / OCM 88) (Methanosarcina frisia)).